A 176-amino-acid polypeptide reads, in one-letter code: MSKKDTEHDDDFALFKEAVQGVKKLRQDTIIQQPKKNTKQKEIKRSNREASDSEFYFSDEFVPRLNEEGPTRYARDDVSTYEVKRLRRGVYVPDVFLDMHGMTQQEAKRELGAMIAYCVKNEIHCACVQHGIGKHILKQKAPLWLAQHPDVMAFHQAPLEFGGDGALLVLLSIPEK.

The interval 29-51 (TIIQQPKKNTKQKEIKRSNREAS) is disordered. Basic and acidic residues predominate over residues 39-51 (KQKEIKRSNREAS). The Smr domain occupies 97 to 172 (LDMHGMTQQE…GDGALLVLLS (76 aa)).

It belongs to the SmrB family. As to quaternary structure, associates with collided ribosomes, but not with correctly translating polysomes.

Functionally, acts as a ribosome collision sensor. Detects stalled/collided disomes (pairs of ribosomes where the leading ribosome is stalled and a second ribosome has collided with it) and endonucleolytically cleaves mRNA at the 5' boundary of the stalled ribosome. Stalled/collided disomes form a new interface (primarily via the 30S subunits) that binds SmrB. Cleaved mRNA becomes available for tmRNA ligation, leading to ribosomal subunit dissociation and rescue of stalled ribosomes. In Vibrio parahaemolyticus serotype O3:K6 (strain RIMD 2210633), this protein is Ribosome rescue factor SmrB.